Here is a 293-residue protein sequence, read N- to C-terminus: Cytosolic Fe-S cluster assembly factor CFD1 (293 aa).

25 to 32 contacts ATP; that stretch reads GKGGVGKS. Cysteine 201 and cysteine 204 together coordinate [4Fe-4S] cluster. The residue at position 291 (serine 291) is a Phosphoserine.

It belongs to the Mrp/NBP35 ATP-binding proteins family. NUBP2/CFD1 subfamily. Heterotetramer of 2 NBP35 and 2 CFD1 chains. The cofactor is [4Fe-4S] cluster.

It localises to the cytoplasm. Its function is as follows. Component of the cytosolic iron-sulfur (Fe/S) protein assembly (CIA) machinery. Required for maturation of extramitochondrial Fe-S proteins. The NBP35-CFD1 heterotetramer forms a Fe-S scaffold complex, mediating the de novo assembly of an Fe-S cluster and its transfer to target apoproteins. Nucleotide binding/hydrolysis seems to be critcal for loading of Fe-S clusters onto CFD1 and NBP35. Required for biogenesis and export of both ribosomal subunits, which may reflect a role in assembly of the Fe/S clusters in RLI1, a protein which performs rRNA processing and ribosome export. This chain is Cytosolic Fe-S cluster assembly factor CFD1, found in Saccharomyces cerevisiae (strain ATCC 204508 / S288c) (Baker's yeast).